Here is a 162-residue protein sequence, read N- to C-terminus: Transcription elongation factor GreA (162 aa).

The stretch at 45 to 75 (ENAEYEAAREKQAFIEGRIKELEDMAARAEI) forms a coiled coil.

Belongs to the GreA/GreB family.

Its function is as follows. Necessary for efficient RNA polymerase transcription elongation past template-encoded arresting sites. The arresting sites in DNA have the property of trapping a certain fraction of elongating RNA polymerases that pass through, resulting in locked ternary complexes. Cleavage of the nascent transcript by cleavage factors such as GreA or GreB allows the resumption of elongation from the new 3'terminus. GreA releases sequences of 2 to 3 nucleotides. The chain is Transcription elongation factor GreA from Rickettsia canadensis (strain McKiel).